Reading from the N-terminus, the 478-residue chain is UDP-glycosyltransferase 71B5 (478 aa).

Residues Ser280, 347–349, 364–372, and 386–389 each bind UDP-alpha-D-glucose; these read APQ, HCGWNSILE, and YAEQ.

This sequence belongs to the UDP-glycosyltransferase family.

Its function is as follows. Possesses low quercetin 3-O-glucosyltransferase activity in vitro. This is UDP-glycosyltransferase 71B5 (UGT71B5) from Arabidopsis thaliana (Mouse-ear cress).